Reading from the N-terminus, the 516-residue chain is DNA-(apurinic or apyrimidinic site) endonuclease 2 (516 aa).

The Mg(2+) site is built by N8 and E47. Residue Y155 is part of the active site. Mg(2+) is bound by residues D196, N198, D302, and H303. D196 acts as the Proton donor/acceptor in catalysis. Residue H303 is the Proton acceptor of the active site. Positions 357-366 are enriched in polar residues; it reads QPSHQIQAQR. The segment at 357–389 is disordered; it reads QPSHQIQAQRQPRKACMHSTRLRKSQGGPKRKQ. Positions 367-389 are enriched in basic residues; that stretch reads QPRKACMHSTRLRKSQGGPKRKQ. Residue K370 forms a Glycyl lysine isopeptide (Lys-Gly) (interchain with G-Cter in ubiquitin) linkage. Residues 389-396 are required for the interaction and colocalization with PCNA in nuclear foci in presence of oxidative-induced DNA damaging agents; that stretch reads QKNLMSYF. Zn(2+) is bound by residues C467, H470, C493, and C507. Residues 467-516 form a GRF-type zinc finger; it reads CGGHREPCVMRTVKKTGPNFGRQFYMCARPRGPPSDPSSRCNFFLWSRPS.

This sequence belongs to the DNA repair enzymes AP/ExoA family. Interacts with PCNA. This interaction is increased by misincorporation of uracil in nuclear DNA. Requires Mg(2+) as cofactor. The cofactor is Mn(2+). Ubiquitinated by the CUL9-RBX1 complex. Ubiquitinated by MKRN3 at Lys-370 leading to proteasomal degradation. In terms of tissue distribution, expressed in lymphocytes, thymocytes and splenocytes (at protein level). Highly expressed in the thymus and weakly expressed in the bone marrow, spleen, eye, kidney, lung, brain and uterus.

The protein resides in the nucleus. The protein localises to the cytoplasm. It localises to the mitochondrion. It carries out the reaction Exonucleolytic cleavage in the 3'- to 5'-direction to yield nucleoside 5'-phosphates.. 3'-5' exonuclease activity is activated by sodium and manganese. 3'-5' exonuclease and 3'-phosphodiesterase activities are stimulated in presence of PCNA. In terms of biological role, functions as a weak apurinic/apyrimidinic (AP) endodeoxyribonuclease in the DNA base excision repair (BER) pathway of DNA lesions induced by oxidative and alkylating agents. Initiates repair of AP sites in DNA by catalyzing hydrolytic incision of the phosphodiester backbone immediately adjacent to the damage, generating a single-strand break with 5'-deoxyribose phosphate and 3'-hydroxyl ends. Also displays double-stranded DNA 3'-5' exonuclease, 3'-phosphodiesterase activities. Shows robust 3'-5' exonuclease activity on 3'-recessed heteroduplex DNA and is able to remove mismatched nucleotides preferentially. Shows fairly strong 3'-phosphodiesterase activity involved in the removal of 3'-damaged termini formed in DNA by oxidative agents. In the nucleus functions in the PCNA-dependent BER pathway. Plays a role in reversing blocked 3' DNA ends, problematic lesions that preclude DNA synthesis. Required for somatic hypermutation (SHM) and DNA cleavage step of class switch recombination (CSR) of immunoglobulin genes. Required for proper cell cycle progression during proliferation of peripheral lymphocytes. The polypeptide is DNA-(apurinic or apyrimidinic site) endonuclease 2 (Apex2) (Mus musculus (Mouse)).